The chain runs to 183 residues: Peptidoglycan recognition protein 1 (183 aa).

The signal sequence occupies residues 1–17; sequence MLFAWAPFPALLGLADS. 3 disulfide bridges follow: C18–C142, C34–C79, and C55–C61. In terms of domain architecture, N-acetylmuramoyl-L-alanine amidase spans 40-168; the sequence is KPVRYVVISH…RDVQSTLSPG (129 aa).

Belongs to the N-acetylmuramoyl-L-alanine amidase 2 family. Expressed in all regions of the brain.

It localises to the secreted. It is found in the cytoplasmic granule. Its function is as follows. Innate immunity protein that plays several important functions in antimicrobial and antitumor defense systems. Acts as a pattern receptor that binds to murein peptidoglycans (PGN) of Gram-positive bacteria and thus provides bactericidal activity. Forms an equimolar complex with heat shock protein HSPA1A and induces programmed cell death through apoptosis and necroptosis in tumor cell lines by activating the TNFR1 receptor on the target cell membrane. In addition, acts in complex with the Ca(2+)-binding protein S100A4 as a chemoattractant able to induce lymphocyte movement. Mechanistically, this complex acts as a ligand of the chemotactic receptors CCR5 and CXCR3 which are present on the cells of the immune system. Promotes also the activation of lymphocytes that become able to kill virus-infected cells as well as tumor cells by modulating the spectrum of their target-cell specificity. Induction of cytotoxicity on monocyte surface requires interaction with TREM1 receptor. The polypeptide is Peptidoglycan recognition protein 1 (Pglyrp1) (Rattus norvegicus (Rat)).